The primary structure comprises 240 residues: Ribonuclease PH (240 aa).

Residues Arg-87 and Gly-125–Arg-127 contribute to the phosphate site.

This sequence belongs to the RNase PH family. In terms of assembly, homohexameric ring arranged as a trimer of dimers.

The catalysed reaction is tRNA(n+1) + phosphate = tRNA(n) + a ribonucleoside 5'-diphosphate. Functionally, phosphorolytic 3'-5' exoribonuclease that plays an important role in tRNA 3'-end maturation. Removes nucleotide residues following the 3'-CCA terminus of tRNAs; can also add nucleotides to the ends of RNA molecules by using nucleoside diphosphates as substrates, but this may not be physiologically important. Probably plays a role in initiation of 16S rRNA degradation (leading to ribosome degradation) during starvation. The chain is Ribonuclease PH from Pseudomonas syringae pv. tomato (strain ATCC BAA-871 / DC3000).